Here is a 310-residue protein sequence, read N- to C-terminus: Beta-ketoacyl-[acyl-carrier-protein] synthase III (310 aa).

Active-site residues include cysteine 116 and histidine 239. Residues 240–244 (QANYR) form an ACP-binding region. Asparagine 269 is an active-site residue.

This sequence belongs to the thiolase-like superfamily. FabH family. Homodimer.

The protein localises to the cytoplasm. The catalysed reaction is malonyl-[ACP] + acetyl-CoA + H(+) = 3-oxobutanoyl-[ACP] + CO2 + CoA. The protein operates within lipid metabolism; fatty acid biosynthesis. In terms of biological role, catalyzes the condensation reaction of fatty acid synthesis by the addition to an acyl acceptor of two carbons from malonyl-ACP. Catalyzes the first condensation reaction which initiates fatty acid synthesis and may therefore play a role in governing the total rate of fatty acid production. Possesses both acetoacetyl-ACP synthase and acetyl transacylase activities. Its substrate specificity determines the biosynthesis of branched-chain and/or straight-chain of fatty acids. This Acholeplasma laidlawii (strain PG-8A) protein is Beta-ketoacyl-[acyl-carrier-protein] synthase III.